The primary structure comprises 1131 residues: Inositol hexakisphosphate and diphosphoinositol-pentakisphosphate kinase 2 (1131 aa).

Residues 21–53 (DELLDQSKPENLDNLYEHTEDEEDEEDDEYDSP) are disordered. The segment covering 25-38 (DQSKPENLDNLYEH) has biased composition (basic and acidic residues). The segment covering 39 to 52 (TEDEEDEEDDEYDS) has biased composition (acidic residues). 67-68 (KK) is a binding site for substrate. Residues R148, K201, H208, R227, 251-254 (EEFM), and 260-262 (DVK) each bind ATP. Position 227–228 (227–228 (RK)) interacts with substrate. Positions 262 and 276 each coordinate substrate. ATP contacts are provided by residues S278, D323, and 335 to 337 (DVN). 340-343 (SFVK) contributes to the substrate binding site. A polyphosphoinositide-binding domain region spans residues 385–456 (PTTSGTKMEL…VLDIARQLLV (72 aa)). A disordered region spans residues 912–951 (KGCEEDKNLPSGFGYRPASQENESSKKHTHANDSDEDLGV). Residues 934 to 951 (ESSKKHTHANDSDEDLGV) show a composition bias toward basic and acidic residues.

Belongs to the histidine acid phosphatase family. VIP1 subfamily.

The protein resides in the cytoplasm. It localises to the cytosol. It carries out the reaction 1D-myo-inositol hexakisphosphate + ATP = 1-diphospho-1D-myo-inositol 2,3,4,5,6-pentakisphosphate + ADP. The enzyme catalyses 5-diphospho-1D-myo-inositol 1,2,3,4,6-pentakisphosphate + ATP + H(+) = 1,5-bis(diphospho)-1D-myo-inositol 2,3,4,6-tetrakisphosphate + ADP. Bifunctional inositol kinase that acts in concert with the IP6K kinases IP6K1, IP6K2 and IP6K3 to synthesize the diphosphate group-containing inositol pyrophosphates diphosphoinositol pentakisphosphate, PP-InsP5, and bis-diphosphoinositol tetrakisphosphate, (PP)2-InsP4. PP-InsP5 and (PP)2-InsP4, also respectively called InsP7 and InsP8, regulate a variety of cellular processes, including apoptosis, vesicle trafficking, cytoskeletal dynamics, exocytosis, insulin signaling and neutrophil activation. Phosphorylates inositol hexakisphosphate (InsP6) at position 1 to produce PP-InsP5 which is in turn phosphorylated by IP6Ks to produce (PP)2-InsP4. Alternatively, phosphorylates PP-InsP5 at position 1, produced by IP6Ks from InsP6, to produce (PP)2-InsP4. The chain is Inositol hexakisphosphate and diphosphoinositol-pentakisphosphate kinase 2 from Xenopus laevis (African clawed frog).